Consider the following 465-residue polypeptide: Auxin transporter-like protein 3 (465 aa).

Over 1-52 (MTSEKVETVVAGNYLEMEREEEGSKSTTGKLSKFFWHGGSVYDAWFSCASNQ) the chain is Cytoplasmic. The helical transmembrane segment at 53–70 (VAQVLLTLPYSFSQLGML) threads the bilayer. At 71-72 (SG) the chain is on the extracellular side. The helical transmembrane segment at 73 to 93 (ILFQIFYGLMGSWTAYIISVL) threads the bilayer. Topologically, residues 94–129 (YVEYRTRKEREKVDFRNHVIQWFEVLDGLLGKHWRN) are cytoplasmic. A helical membrane pass occupies residues 130-150 (LGLFFNCTFLLFGSVIQLIAC). Over 151 to 165 (ASNIYYINDHLDKRT) the chain is Extracellular. Residues 166 to 186 (WTYIFGACCATTVFIPSFHNY) traverse the membrane as a helical segment. At 187–189 (RIW) the chain is on the cytoplasmic side. The helical transmembrane segment at 190-210 (SFLGLVMTTYTAWYMTIASIL) threads the bilayer. Topologically, residues 211–225 (HGQAEDVKHSGPTKL) are extracellular. A helical transmembrane segment spans residues 226-246 (VLYFTGATNILYTFGGHAVTV). At 247–259 (EIMHAMWKPQKFK) the chain is on the cytoplasmic side. A helical membrane pass occupies residues 260–280 (MIYLIATLYVMTLTLPSAAAV). Over 281–307 (YWAFGDNLLTHSNALSLLPRTGFRDTA) the chain is Extracellular. The chain crosses the membrane as a helical span at residues 308-328 (VILMLIHQFITFGFACTPLYF). Residues 329 to 349 (VWEKFLGVHETKSLLKRALVR) are Cytoplasmic-facing. Residues 350–370 (LPVVIPIWFLAIIFPFFGPIN) form a helical membrane-spanning segment. The Extracellular portion of the chain corresponds to 371–374 (STVG). A helical transmembrane segment spans residues 375-395 (SLLVSFTVYIIPALAHMVTFA). Residues 396–421 (SAPARENAVERPPSFLGGWVGLYSVN) are Cytoplasmic-facing. A helical membrane pass occupies residues 422–442 (VFVAVWVLVVGFGLGGWASML). The Extracellular segment spans residues 443–465 (NFVHQIKTFGLFAKCFQCPPHKA).

This sequence belongs to the amino acid/polyamine transporter 2 family. Amino acid/auxin permease (AAAP) (TC 2.A.18.1) subfamily. In terms of tissue distribution, shoots and roots of nodulating plants. Low levels in roots, nodules, stems, petioles, leaves, shoot apices and flowers.

The protein resides in the cell membrane. Its function is as follows. Carrier protein involved in proton-driven auxin influx. Mediates the formation of auxin gradient from developing leaves (site of auxin biosynthesis) to tips by contributing to the loading of auxin in vascular tissues and facilitating acropetal (base to tip) auxin transport within inner tissues of the root apex, and basipetal (tip to base) auxin transport within outer tissues of the root apex. May be involved in lateral roots and nodules formation. The polypeptide is Auxin transporter-like protein 3 (LAX3) (Medicago truncatula (Barrel medic)).